The chain runs to 577 residues: Probable cytochrome c biosynthesis protein (577 aa).

This sequence belongs to the CcmF/CycK/Ccl1/NrfE/CcsA family.

The protein resides in the mitochondrion. Its function is as follows. Could be involved in assembly and maturation of cytochromes c. May play a role in guidance of apocytochromes and heme groups for the covalent linkage introduced by the cytochrome-c-heme lyase. This Oenothera berteroana (Bertero's evening primrose) protein is Probable cytochrome c biosynthesis protein.